A 452-amino-acid polypeptide reads, in one-letter code: tRNA(Ile)-lysidine synthase (452 aa).

27 to 32 provides a ligand contact to ATP; sequence SGGIDS.

The protein belongs to the tRNA(Ile)-lysidine synthase family.

It localises to the cytoplasm. It catalyses the reaction cytidine(34) in tRNA(Ile2) + L-lysine + ATP = lysidine(34) in tRNA(Ile2) + AMP + diphosphate + H(+). Its function is as follows. Ligates lysine onto the cytidine present at position 34 of the AUA codon-specific tRNA(Ile) that contains the anticodon CAU, in an ATP-dependent manner. Cytidine is converted to lysidine, thus changing the amino acid specificity of the tRNA from methionine to isoleucine. This is tRNA(Ile)-lysidine synthase from Persephonella marina (strain DSM 14350 / EX-H1).